Consider the following 330-residue polypeptide: MTLIVTGAAGFIGANIVKALNERGETRIIAVDNLTRADKFKNLVDCEIDDYLDKTEFVERFARGDFGKVRAVFHEGACSDTMETDGRYMMDNNFRYSRAVLDACLAQGAQFLYASSAAIYGGSTRFVEERSVEAPLNVYGYSKFLFDQVVRRVLPNAKSQIAGFRYFNVYGPRETHKGRMASVAFHNFNQFRAEGKVKLFGEYNGYAAGEQTRDFVSVEDVAKVNLFFFDHPEKSGIFNLGTGRAQPFNDIASTVVNTLRALDNLPPLTLAQQVEQGLIEYVPFPDALRGKYQCFTQADQTKLRAAGYDAPFLTVQEGVDRYVRWLSGQV.

NADP(+) contacts are provided by residues 11-12 (FI), 32-33 (DN), lysine 39, lysine 54, 75-79 (EGACS), and asparagine 92. Tyrosine 139 acts as the Proton acceptor in catalysis. NADP(+) is bound at residue lysine 143. A substrate-binding site is contributed by asparagine 168. Positions 169 and 177 each coordinate NADP(+). Residue lysine 177 is the Proton acceptor of the active site. Substrate is bound by residues arginine 179, histidine 186, 200-203 (FGEY), arginine 213, and tyrosine 292.

The protein belongs to the NAD(P)-dependent epimerase/dehydratase family. HldD subfamily. In terms of assembly, homopentamer. NADP(+) is required as a cofactor.

It carries out the reaction ADP-D-glycero-beta-D-manno-heptose = ADP-L-glycero-beta-D-manno-heptose. It participates in nucleotide-sugar biosynthesis; ADP-L-glycero-beta-D-manno-heptose biosynthesis; ADP-L-glycero-beta-D-manno-heptose from D-glycero-beta-D-manno-heptose 7-phosphate: step 4/4. Catalyzes the interconversion between ADP-D-glycero-beta-D-manno-heptose and ADP-L-glycero-beta-D-manno-heptose via an epimerization at carbon 6 of the heptose. The polypeptide is ADP-L-glycero-D-manno-heptose-6-epimerase (Burkholderia multivorans (strain ATCC 17616 / 249)).